Reading from the N-terminus, the 412-residue chain is Odorant receptor 47b (412 aa).

At 1–74 (MNDSGYQSNL…NLFIMCNVMT (74 aa)) the chain is on the cytoplasmic side. The chain crosses the membrane as a helical span at residues 75–95 (IFWTMFVALPESKNVIEMGDD). At 96-103 (LVWISGMA) the chain is on the extracellular side. Residues 104–124 (LVFTKIFYMHLRCDEIDELIS) traverse the membrane as a helical segment. The Cytoplasmic segment spans residues 125-169 (DFEYYNRELRPHNIDEEVLGWQRLCYVIESGLYINCFCLVNFFSA). Residues 170–190 (AIFLQPLLGEGKLPFHSVYPF) traverse the membrane as a helical segment. Residues 191–229 (QWHRLDLHPYTFWFLYIWQSLTSQHNLMSILMVDMVGIS) are Extracellular-facing. A helical transmembrane segment spans residues 230 to 250 (TFLQTALNLKLLCIEIRKLGD). Topologically, residues 251 to 302 (MEVSDKRFHEEFCRVVRFHQHIIKLVGKANRAFNGAFNAQLMASFSLISIST) are cytoplasmic. A helical membrane pass occupies residues 303-323 (FETMAAAAVDPKMAAKFVLLM). Residues 324–330 (LVAFIQL) are Extracellular-facing. Residues 331-351 (SLWCVSGTLVYTQSVEVAQAA) traverse the membrane as a helical segment. Residues 352-389 (FDINDWHTKSPGIQRDISFVILRAQKPLMYVAEPFLPF) lie on the Cytoplasmic side of the membrane. A helical transmembrane segment spans residues 390–410 (TLGTYMLVLKNCYRLLALMQE). The Extracellular portion of the chain corresponds to 411–412 (SM).

This sequence belongs to the insect chemoreceptor superfamily. Heteromeric odorant receptor channel (TC 1.A.69) family. Or49a subfamily. As to quaternary structure, interacts with Orco. Complexes exist early in the endomembrane system in olfactory sensory neurons (OSNs), coupling these complexes to the conserved ciliary trafficking pathway. In terms of tissue distribution, expressed in olfactory sensory neurons in the antenna.

It localises to the cell membrane. Functionally, odorant receptor which mediates acceptance or avoidance behavior, depending on its substrates. The odorant receptor repertoire encodes a large collection of odor stimuli that vary widely in identity, intensity, and duration. May form a complex with Orco to form odorant-sensing units, providing sensitive and prolonged odorant signaling and calcium permeability. Plays an important role in sociosexual interactions since its enhances courtship in a pheromone-dependent manner. The polypeptide is Odorant receptor 47b (Or47b) (Drosophila melanogaster (Fruit fly)).